A 311-amino-acid chain; its full sequence is Protoheme IX farnesyltransferase (311 aa).

9 consecutive transmembrane segments (helical) span residues 38–58, 62–82, 113–133, 134–154, 162–182, 188–208, 230–250, 251–271, and 286–306; these read IKVV…APDM, YFVQ…AAVI, LIFS…AANW, LTAQ…TMFL, IVIG…SETG, PWIL…ALAI, FTKT…FLPF, LIHM…IIFI, and ALNL…ALFA.

Belongs to the UbiA prenyltransferase family. Protoheme IX farnesyltransferase subfamily.

It localises to the cell inner membrane. The enzyme catalyses heme b + (2E,6E)-farnesyl diphosphate + H2O = Fe(II)-heme o + diphosphate. It functions in the pathway porphyrin-containing compound metabolism; heme O biosynthesis; heme O from protoheme: step 1/1. Converts heme B (protoheme IX) to heme O by substitution of the vinyl group on carbon 2 of heme B porphyrin ring with a hydroxyethyl farnesyl side group. This Psychromonas ingrahamii (strain DSM 17664 / CCUG 51855 / 37) protein is Protoheme IX farnesyltransferase.